Reading from the N-terminus, the 263-residue chain is Splicing regulator sde2 (263 aa).

Residues 1–84 (MECKTVFLNG…LTLCTRVLGG (84 aa)) constitute a propeptide, UBL. Disordered regions lie at residues 95-118 (AGGR…LDGN), 137-158 (PAET…LAAD), and 194-263 (STSA…LYGL). Basic and acidic residues predominate over residues 102–117 (KRNEQENQDSCRDLDG). Composition is skewed to low complexity over residues 194-209 (STSA…GATT) and 219-230 (NNNSSINSWSRR).

The protein belongs to the SDE2 family. As to quaternary structure, interacts with cay1/cactin. Interacts with prp19. Interacts with cwf12. Interacts with cdc5. The N-terminal UBL (ubiquitin-like) propeptide is cleaved at Gly-84 by the deubiquitinating enzymes ubp5 and ubp15; the resulting mature sde2 associates with spliceosomes. Post-translationally, polyubiquitinated; ubiquitination is partially dependent on ubr11.

It is found in the cytoplasm. The protein resides in the nucleus. In terms of biological role, plays a role in pre-mRNA splicing by facilitating excision of introns featuring relatively long (&gt;21 nucleotides) spacing between the branchpoint and 3'-splice site (ss). Recruits cactin to the spliceosome which may enable folding of RNA between the branchpoint and 3'-ss, to guide the splice site towards the spliceosome's catalytic center. Required for proper chromatin organization by assisting splicing of components involved in genomic stability and telomere organization. The polypeptide is Splicing regulator sde2 (Schizosaccharomyces pombe (strain 972 / ATCC 24843) (Fission yeast)).